Here is a 181-residue protein sequence, read N- to C-terminus: Probable integrase/recombinase YoeC (181 aa).

In terms of domain architecture, Tyr recombinase spans 3-176; the sequence is IVQPIRSLEK…DEDTTRAAYK (174 aa). Catalysis depends on residues Arg40, Lys64, His128, Arg131, and His154. The active-site O-(3'-phospho-DNA)-tyrosine intermediate is Tyr163.

The protein belongs to the 'phage' integrase family.

This is Probable integrase/recombinase YoeC (yoeC) from Bacillus subtilis (strain 168).